We begin with the raw amino-acid sequence, 429 residues long: Cytochrome bc1 complex Rieske iron-sulfur subunit (429 aa).

The segment at 1–45 (MSRADDDAVGVPPTCGGRSDEEERRIVPGPNPQDGAKDGAKATAV) is disordered. 3 consecutive transmembrane segments (helical) span residues 96 to 116 (VAVW…IFLF), 137 to 157 (PLYG…AVLY), and 207 to 227 (FGVG…GGLI). The 95-residue stretch at 316–410 (RNPVMLIRIK…ITIDTDGYLV (95 aa)) folds into the Rieske domain. [2Fe-2S] cluster-binding residues include Cys-353, His-355, Cys-372, and His-375. Residues Cys-358 and Cys-374 are joined by a disulfide bond.

Belongs to the Rieske iron-sulfur protein family. In terms of assembly, the cytochrome bc1 complex is composed of a cytochrome b (QcrB), the Rieske iron-sulfur protein (QcrA) and a diheme cytochrome c (QcrC) subunit. It depends on [2Fe-2S] cluster as a cofactor.

It localises to the cell membrane. Functionally, iron-sulfur subunit of the cytochrome bc1 complex, an essential component of the respiratory electron transport chain required for ATP synthesis. The bc1 complex catalyzes the oxidation of menaquinol and the reduction of cytochrome c in the respiratory chain. The bc1 complex operates through a Q-cycle mechanism that couples electron transfer to generation of the proton gradient that drives ATP synthesis. The chain is Cytochrome bc1 complex Rieske iron-sulfur subunit (qcrA) from Mycobacterium tuberculosis (strain CDC 1551 / Oshkosh).